A 96-amino-acid chain; its full sequence is Small ribosomal subunit protein bS6 (96 aa).

It belongs to the bacterial ribosomal protein bS6 family.

Binds together with bS18 to 16S ribosomal RNA. The sequence is that of Small ribosomal subunit protein bS6 from Heliobacterium modesticaldum (strain ATCC 51547 / Ice1).